The sequence spans 400 residues: NADPH dehydrogenase 2 (400 aa).

FMN is bound by residues Thr-38 and Gln-115. Substrate contacts are provided by His-192 and Asn-195. The active-site Proton donor is Tyr-197. FMN is bound by residues Arg-244 and Arg-349. The residue at position 353 (Ser-353) is a Phosphoserine. Substrate is bound at residue Tyr-376. Ser-379 is modified (phosphoserine).

It belongs to the NADH:flavin oxidoreductase/NADH oxidase family. Homodimer or heterodimer with OYE3. Requires FMN as cofactor.

The protein localises to the cytoplasm. It is found in the nucleus. It localises to the mitochondrion. The enzyme catalyses A + NADPH + H(+) = AH2 + NADP(+). Flavin-dependent enoate reductase that catalyzes the chemo- and stereoslective hydrogenation of electron-poor alkenes. The enzyme is reduced by NADPH, and oxygen, quinones, and alpha,beta-unsaturated aldehydes and ketones can act as electron acceptors to complete catalytic turnover. The physiological oxidant remains elusive. Has an antioxidant activity, reducing reactive oxygen species (ROS) levels when overexpressed. Formation of OYE2-OYE3 heterodimers contribute to the induction of programmed cell death upon oxidative stress. The chain is NADPH dehydrogenase 2 from Saccharomyces cerevisiae (strain ATCC 204508 / S288c) (Baker's yeast).